A 794-amino-acid polypeptide reads, in one-letter code: PAN2-PAN3 deadenylation complex subunit PAN3 (794 aa).

The C3H1-type zinc finger occupies 7 to 36 (SAKDVLCKNILIYGYCKFQDKGCAFSHNKQ). 2 disordered regions span residues 40–97 (PQQQ…TQSK) and 187–226 (AQVG…QQQL). Composition is skewed to polar residues over residues 83–94 (IQSNGMVNSQET) and 189–199 (VGNNPGSTAPA). Low complexity predominate over residues 200 to 226 (NLQLQQKQPQQPQQPQQPQQHQQQQQL). Positions 372 to 668 (QTMQHLSLPD…MDQFILQYIS (297 aa)) are pseudokinase domain. ATP contacts are provided by residues Arg425 and 494–501 (DYYPNLTT). Positions 669–707 (SHFMTLMNKLQNSHDWVELQLSTELENARLFRLMTKINF) form a coiled coil. Residues 708-794 (IISEMPTYDL…IDTQFRLLRG (87 aa)) are knob domain.

This sequence belongs to the protein kinase superfamily. PAN3 family. In terms of assembly, homodimer. Forms a heterotrimer with a catalytic subunit PAN2 to form the poly(A)-nuclease (PAN) deadenylation complex. Interacts (via PAM-2 motif) with poly(A)-binding protein PAB1 (via PABC domain), conferring substrate specificity of the enzyme complex.

Its subcellular location is the cytoplasm. Regulatory subunit of the poly(A)-nuclease (PAN) deadenylation complex, one of two cytoplasmic mRNA deadenylases involved in mRNA turnover. PAN specifically shortens poly(A) tails of RNA and the activity is stimulated by poly(A)-binding protein PAB1. PAN deadenylation is followed by rapid degradation of the shortened mRNA tails by the CCR4-NOT complex. Deadenylated mRNAs are then degraded by two alternative mechanisms, namely exosome-mediated 3'-5' exonucleolytic degradation, or deadenylation-dependent mRNA decaping and subsequent 5'-3' exonucleolytic degradation by XRN1. May also be involved in post-transcriptional maturation of mRNA poly(A) tails. PAN3 acts as a positive regulator for PAN activity, recruiting the catalytic subunit PAN2 to mRNA via its interaction with RNA and with PAB1. This Lodderomyces elongisporus (strain ATCC 11503 / CBS 2605 / JCM 1781 / NBRC 1676 / NRRL YB-4239) (Yeast) protein is PAN2-PAN3 deadenylation complex subunit PAN3.